The chain runs to 236 residues: UPF0502 protein Bcen2424_5610 (236 aa).

This sequence belongs to the UPF0502 family.

This Burkholderia cenocepacia (strain HI2424) protein is UPF0502 protein Bcen2424_5610.